We begin with the raw amino-acid sequence, 409 residues long: Elongation factor Tu (409 aa).

In terms of domain architecture, tr-type G spans 10 to 214 (KPHVNIGTIG…EVDAYIPEPE (205 aa)). The segment at 19–26 (GHVDHGKT) is G1. 19-26 (GHVDHGKT) contacts GTP. Mg(2+) is bound at residue threonine 26. Positions 60–64 (GITIN) are G2. A G3 region spans residues 81-84 (DCPG). Residues 81-85 (DCPGH) and 136-139 (NKQD) each bind GTP. The interval 136 to 139 (NKQD) is G4. Residues 174 to 176 (SAL) are G5.

This sequence belongs to the TRAFAC class translation factor GTPase superfamily. Classic translation factor GTPase family. EF-Tu/EF-1A subfamily. Monomer.

The protein localises to the cytoplasm. The catalysed reaction is GTP + H2O = GDP + phosphate + H(+). GTP hydrolase that promotes the GTP-dependent binding of aminoacyl-tRNA to the A-site of ribosomes during protein biosynthesis. The protein is Elongation factor Tu of Rippkaea orientalis (strain PCC 8801 / RF-1) (Cyanothece sp. (strain PCC 8801)).